Reading from the N-terminus, the 324-residue chain is Polyprenol dehydrogenase (324 aa).

Tyr206 serves as the catalytic Proton acceptor. Residues Tyr206, Lys210, and Thr243 each coordinate NAD(+).

The protein belongs to the short-chain dehydrogenases/reductases (SDR) family.

It localises to the lipid droplet. The catalysed reaction is a di-trans,poly-cis-polyprenol + NAD(+) = a di-trans,poly-cis-polyprenal + NADH + H(+). The enzyme catalyses a di-trans,poly-cis-polyprenol + NADP(+) = a di-trans,poly-cis-polyprenal + NADPH + H(+). It carries out the reaction a di-trans,poly-cis-dolichol + NADP(+) = a di-trans,poly-cis-dolichal + NADPH + H(+). It catalyses the reaction a di-trans,poly-cis-dolichol + NAD(+) = a di-trans,poly-cis-dolichal + NADH + H(+). It participates in protein modification; protein glycosylation. In terms of biological role, oxidoreductase that plays a key role in early steps of protein N-linked glycosylation by mediating two non-consecutive steps in dolichol biosynthesis. Acts both as a NAD(+)-dependent dehydrogenase and as a NADPH-dependent reductase during the conversion of polyprenol into dolichol. First catalyzes the NAD(+)-dependent dehydrogenation of polyprenol into polyprenal; polyprenal is then reduced into dolichal by srd5a3. It then catalyzes the NADPH-dependent reduction of dolichal into dolichol. This Danio rerio (Zebrafish) protein is Polyprenol dehydrogenase.